Here is a 2187-residue protein sequence, read N- to C-terminus: Nascent polypeptide-associated complex subunit alpha, muscle-specific form (2187 aa).

3 disordered regions span residues 1-20, 32-73, and 172-196; these read MPGE…PQPQ, LKVA…STPF, and IPPL…KGTA. A compositionally biased stretch (polar residues) spans 9–20; that stretch reads VPATEQELPQPQ. A compositionally biased stretch (polar residues) spans 178–192; it reads KTSTSQVPSQGTLNL. At arginine 247 the chain carries Asymmetric dimethylarginine. 5 disordered regions span residues 335 to 370, 579 to 611, 738 to 835, 884 to 1847, and 1892 to 2053; these read DSGA…LSPK, NTVS…SPLV, PKGS…PKDT, KETL…PVEK, and PEAV…KAMS. A compositionally biased stretch (polar residues) spans 347–369; it reads SAVTNELCSPPGSSNVAGTSLSP. The residue at position 590 (threonine 590) is a Phosphothreonine. Composition is skewed to polar residues over residues 599–609, 818–835, and 887–905; these read AKNTAPSTTSP, VTPT…PKDT, and LATS…TPKS. Phosphoserine is present on serine 822. Over residues 941–951 the composition is skewed to pro residues; that stretch reads PHVPPTSPPKS. Positions 976–998 are enriched in low complexity; sequence TPTYPKKSPKPAASKKTPATPSP. The segment covering 1106-1122 has biased composition (polar residues); the sequence is TPQNATPNESLAASSQK. Phosphoserine occurs at positions 1174 and 1177. Positions 1174 to 1195 are enriched in low complexity; the sequence is SPLSPKKASKTAAPKEAPATPS. Residue threonine 1364 is modified to Phosphothreonine. Phosphoserine occurs at positions 1368 and 1392. Position 1398 is a phosphothreonine (threonine 1398). Serine 1400 and serine 1423 each carry phosphoserine. A compositionally biased stretch (polar residues) spans 1429-1440; sequence VTPSSKKLSQTV. A compositionally biased stretch (low complexity) spans 1489–1504; it reads SPSSPKKAPKTAAPPS. Serine 1492 is modified (phosphoserine). A compositionally biased stretch (polar residues) spans 1609-1631; it reads PVTTSLAQTAPPSLQKAPSTTIP. Low complexity-rich tracts occupy residues 1636 to 1670 and 1714 to 1727; these read AAPA…TAPK and SSPP…KRAS. The span at 1762-1772 shows a compositional bias: polar residues; that stretch reads ACSTGTTTPQA. Composition is skewed to low complexity over residues 1806 to 1823 and 1892 to 1914; these read KSPG…CPDP and PEAV…LAPS. Residues 1950–1954 carry the PXLXP motif; sequence PPLIP. The span at 1973–1983 shows a compositional bias: pro residues; sequence APKPAGTPAPA. Residues 2001-2014 are compositionally biased toward acidic residues; sequence SDSDESVPELEEQD. The residue at position 2015 (serine 2015) is a Phosphoserine; by ILK1. The segment covering 2016–2029 has biased composition (low complexity); that stretch reads TQTATQQAQLAAAA. A required for DNA-binding region spans residues 2041–2052; sequence QSRSEKKARKAM. Residues 2042 to 2107 enclose the NAC-A/B domain; that stretch reads SRSEKKARKA…AKIEDLSQQA (66 aa). Serine 2104 is subject to Phosphoserine. Lysine 2114 bears the N6-acetyllysine; alternate mark. Lysine 2114 participates in a covalent cross-link: Glycyl lysine isopeptide (Lys-Gly) (interchain with G-Cter in SUMO2); alternate. Phosphothreonine; by GSK3-beta is present on threonine 2131. Threonine 2133 carries the phosphothreonine modification. Phosphoserine is present on residues serine 2138, serine 2158, serine 2163, and serine 2175. Positions 2148–2185 constitute a UBA domain; the sequence is VEVKDIELVMSQANVSRAKAVRALKNNSNDIVNAIMEL.

Belongs to the NAC-alpha family. As to quaternary structure, interacts (via PXLXP motif) with the muscle-restricted histone methyltransferase SMYD1 (via MYND-type zinc finger). In terms of processing, phosphorylation of Ser-2015 by ILK during cell adhesion may promote nuclear localization. Phosphorylation of Thr-2131 by GSK3B may promote proteasome mediated degradation. In terms of tissue distribution, specifically expressed in heart and skeletal muscle: it is present in differentiated myotubes but not in myoblasts.

The protein localises to the cytoplasm. Its subcellular location is the nucleus. Cardiac- and muscle-specific transcription factor. May act to regulate the expression of genes involved in the development of myotubes. Plays a critical role in ventricular cardiomyocyte expansion and regulates postnatal skeletal muscle growth and regeneration. Involved in the organized assembly of thick and thin filaments of myofibril sarcomeres. The protein is Nascent polypeptide-associated complex subunit alpha, muscle-specific form (Naca) of Mus musculus (Mouse).